The following is a 324-amino-acid chain: Probable carboxylesterase 9 (324 aa).

Residues 86-88 (HGS) carry the Involved in the stabilization of the negatively charged intermediate by the formation of the oxyanion hole motif. Catalysis depends on residues Ser-171, Asp-272, and His-302.

Belongs to the 'GDXG' lipolytic enzyme family. As to expression, expressed in flowers.

The enzyme catalyses a carboxylic ester + H2O = an alcohol + a carboxylate + H(+). In terms of biological role, carboxylesterase acting on esters with varying acyl chain length. The polypeptide is Probable carboxylesterase 9 (CXE9) (Arabidopsis thaliana (Mouse-ear cress)).